The primary structure comprises 369 residues: tRNA 2-selenouridine synthase (369 aa).

In terms of domain architecture, Rhodanese spans 15–138 (FIAGQPLIDL…MRQYLIGVIE (124 aa)). Cys-98 acts as the S-selanylcysteine intermediate in catalysis.

This sequence belongs to the SelU family. Monomer.

The catalysed reaction is 5-methylaminomethyl-2-thiouridine(34) in tRNA + selenophosphate + (2E)-geranyl diphosphate + H2O + H(+) = 5-methylaminomethyl-2-selenouridine(34) in tRNA + (2E)-thiogeraniol + phosphate + diphosphate. It carries out the reaction 5-methylaminomethyl-2-thiouridine(34) in tRNA + (2E)-geranyl diphosphate = 5-methylaminomethyl-S-(2E)-geranyl-thiouridine(34) in tRNA + diphosphate. The enzyme catalyses 5-methylaminomethyl-S-(2E)-geranyl-thiouridine(34) in tRNA + selenophosphate + H(+) = 5-methylaminomethyl-2-(Se-phospho)selenouridine(34) in tRNA + (2E)-thiogeraniol. It catalyses the reaction 5-methylaminomethyl-2-(Se-phospho)selenouridine(34) in tRNA + H2O = 5-methylaminomethyl-2-selenouridine(34) in tRNA + phosphate. Functionally, involved in the post-transcriptional modification of the uridine at the wobble position (U34) of tRNA(Lys), tRNA(Glu) and tRNA(Gln). Catalyzes the conversion of 2-thiouridine (S2U-RNA) to 2-selenouridine (Se2U-RNA). Acts in a two-step process involving geranylation of 2-thiouridine (S2U) to S-geranyl-2-thiouridine (geS2U) and subsequent selenation of the latter derivative to 2-selenouridine (Se2U) in the tRNA chain. This chain is tRNA 2-selenouridine synthase, found in Shewanella sp. (strain MR-7).